Here is a 1181-residue protein sequence, read N- to C-terminus: MSNSEKQTLAIEWFKNMSEIKKSRENGLVSKVIAKDVHVLSGAKKYGILWKGKEGEMIDHIAKGQNEHLYEMIDFNSPARLFFDMDFKSKDEFGFGCDIPPNQVVVMFMEELQLFVNKLIGHDSGKFNAKEVLITQCKRLDRPDKHSFHLVYPKIVFRNITQMRAFVLSFGHYLFEEKHMMSLAFQKKGKNRSLGRAVFDMSPYTRDRLFRLMGQSKMGEPYENTLRPVKIQEVYETSNNFFDNLIDDNGISSHAQIITLRYSELENISDYMVQPCSFLDMDATPPSTTLGDLIHNSVLKNYGNVPLKTYVAAKQDRRGVTITLLGNNNKTPGNLKSAKDNILPVDWHTLIKEEFRGKEINIENDEQFLEFFTARELKEADYVYYYLNFISDICHFIPDKTMLTWMNGCDDYVSTRSERKLFYAKESSSKKPITGRFALSLLENVYGVDNVNDLRNPVPKPIGDFKNVKRTVMTTEEWEPIEARDLRSRILTEQNKDLKTNNYINGAITMDFEKEEEYAKIGVPEDEEGNRIEMAQRFNSKKRAYFISGQMGASKSSGTLESIVELVMKGMMKNVLIITPRIVLAKQTILKLFTVYKELLGDSKVKRDFKKTNDIDITAMFHKAYQDKEIRQVKEWCRGRINPEMEHCNICVSLINSIHRLNRAVYDTIIFDEPITCIDNFYIELHTKNSNENAAEVVANTISRRNAIVNRLTGFTMLSNQLFFIDAAFTPDSINLCKSLYYGEYSFIVSPREWNKHMRSEGVGDTTVKNTCKRINKENLEIRKRIRIVKTRSEDKSQMIQKEEVTYKIFREPQMICVYDKSLEKPIFQKIIDYKSKNKLLNTLLETICEGQKVVVYCSTQKESERLYHAVKGWTERKMSWIPRLILITGSTVKKEPGEVVNKIKDGDVIFTTSVLGVGTSISEEGLFDCAFMICKLSVGSPLLSDMIQLSARVRATKNRVLHMNISCGQFGVDCSKLTRELHSFQPANYMYGGFMDCLDITHRNRRLFHHVCISNYTIARETMLSEITDALGHVKDATLSRISPEYIYVKDVDHRFLATRDITEQRQLAQKLDVLDCRMEHTEEFVDFVGLYKNKKEGRRVVAKINVPKKNELLHEFWQKSKIGREGYTPVTHKAYSLKRSHSTMVEHDMDDDESTNKKQELEEEDEECIDIDEYNNERF.

A disordered region spans residues 1141 to 1181 (RSHSTMVEHDMDDDESTNKKQELEEEDEECIDIDEYNNERF). Residues 1163–1181 (LEEEDEECIDIDEYNNERF) are compositionally biased toward acidic residues.

This sequence belongs to the eukaryotic-type primase small subunit family.

Its function is as follows. Synthesizes small RNA primers for the Okazaki fragments on both template strands at replication forks during viral DNA synthesis. The chain is Putative primase from Magallana gigas (Pacific oyster).